The following is a 664-amino-acid chain: Exoribonuclease 2 (664 aa).

The RNB domain occupies 193–521; it reads RIDMTHIPFV…INHRMLKALI (329 aa). The region spanning 568-650 is the S1 motif domain; that stretch reads QTLFTGEIFD…ENRSLVAKPT (83 aa).

This sequence belongs to the RNR ribonuclease family. RNase II subfamily.

It localises to the cytoplasm. It catalyses the reaction Exonucleolytic cleavage in the 3'- to 5'-direction to yield nucleoside 5'-phosphates.. Involved in mRNA degradation. Hydrolyzes single-stranded polyribonucleotides processively in the 3' to 5' direction. The protein is Exoribonuclease 2 of Vibrio vulnificus (strain YJ016).